Consider the following 376-residue polypeptide: MAKRDYYEILGVERSADEREIKKAYKRLAMKFHPDRNPDNPESEEKFKEAKEAYEILSDAQKRAAYDKFGHAGVDPNQAGPGGFGGGADFGDVFGDIFGDIFGGGRRSQRAARGSDLRYNMELTLEEAVRGVSKEIKVPTLVECDECHGSGARTGTSAQTCPTCHGSGQVQMRQGFFAVTQACPHCHGKGKIITDPCRKCHGDGRVQKTKTLSVKIPAGVDTGDRIRLAGEGEAGEFGAPAGDLYVQVHVKEHPIFVRDGNNLYCEIPISFTTAALGGEVAVPTLDGRVMLKIPVETQTGRMFRLRGKGVRSLRSGAEGDLLCKAVVETPVKLSDEQKELLKQLEDSLNGSGVKTHKPKADGFFEGVKRFFDDLTG.

In terms of domain architecture, J spans 5–70 (DYYEILGVER…QKRAAYDKFG (66 aa)). The CR-type zinc finger occupies 131-209 (GVSKEIKVPT…CHGDGRVQKT (79 aa)). Zn(2+) is bound by residues Cys144, Cys147, Cys161, Cys164, Cys183, Cys186, Cys197, and Cys200. CXXCXGXG motif repeat units follow at residues 144–151 (CDECHGSG), 161–168 (CPTCHGSG), 183–190 (CPHCHGKG), and 197–204 (CRKCHGDG).

Belongs to the DnaJ family. In terms of assembly, homodimer. It depends on Zn(2+) as a cofactor.

It localises to the cytoplasm. In terms of biological role, participates actively in the response to hyperosmotic and heat shock by preventing the aggregation of stress-denatured proteins and by disaggregating proteins, also in an autonomous, DnaK-independent fashion. Unfolded proteins bind initially to DnaJ; upon interaction with the DnaJ-bound protein, DnaK hydrolyzes its bound ATP, resulting in the formation of a stable complex. GrpE releases ADP from DnaK; ATP binding to DnaK triggers the release of the substrate protein, thus completing the reaction cycle. Several rounds of ATP-dependent interactions between DnaJ, DnaK and GrpE are required for fully efficient folding. Also involved, together with DnaK and GrpE, in the DNA replication of plasmids through activation of initiation proteins. The chain is Chaperone protein DnaJ from Tolumonas auensis (strain DSM 9187 / NBRC 110442 / TA 4).